Here is a 595-residue protein sequence, read N- to C-terminus: uncharacterized protein (595 aa).

Residues 1–23 form the signal peptide; the sequence is MLSLSSPPWLLLLVLFFFANGSA. Residues Asn31, Asn63, Asn88, Asn112, Asn144, Asn187, Asn205, Asn389, Asn480, Asn492, and Asn506 are each glycosylated (N-linked (GlcNAc...) asparagine). Positions 61–83 are enriched in polar residues; it reads LENQTASSSNLNTNNEASDEQTG. 2 disordered regions span residues 61-119 and 141-164; these read LENQ…VSSL and TALN…TKGE. The segment covering 84–119 has biased composition (low complexity); the sequence is NSNSNTSSHSRNINGLPSSNSNIDNANSNSSSVSSL.

Its subcellular location is the secreted. This is an uncharacterized protein from Drosophila melanogaster (Fruit fly).